A 500-amino-acid polypeptide reads, in one-letter code: Probable malate:quinone oxidoreductase (500 aa).

This sequence belongs to the MQO family. It depends on FAD as a cofactor.

The catalysed reaction is (S)-malate + a quinone = a quinol + oxaloacetate. Its pathway is carbohydrate metabolism; tricarboxylic acid cycle; oxaloacetate from (S)-malate (quinone route): step 1/1. The polypeptide is Probable malate:quinone oxidoreductase (Bacillus anthracis (strain A0248)).